Here is a 225-residue protein sequence, read N- to C-terminus: MENINYQILKRSEKKLLKLFFEYFKHVINAHETLNQLLCEDNLEKRKELIKTIYEMEDQSNRSEFKLINESIWTISKNSPLASHLRLTITIIMSSRDLERICDYANNLTKFIEHYLHLDIKIFNNLVTLHQSALNNLKKTFESLQDKEKPLTLQFENATKTIIEFEHQYRLVLTKYYETINKNEVTERIFLIDLVASVKHIERINDYCYNIIKSFLFIKNPEIFN.

This is an uncharacterized protein from Mycoplasma genitalium (strain ATCC 33530 / DSM 19775 / NCTC 10195 / G37) (Mycoplasmoides genitalium).